The sequence spans 322 residues: FAD-dependent monooxygenase subE (322 aa).

FAD is bound by residues Glu-35, Gly-49, Arg-108, and Asp-313.

Belongs to the paxM FAD-dependent monooxygenase family. FAD serves as cofactor.

It functions in the pathway secondary metabolite biosynthesis; terpenoid biosynthesis. Its function is as follows. FAD-dependent monooxygenase; part of the gene cluster that mediates the biosynthesis of the immunosuppressants subglutinols, meroterpenoids consisting of an alpha-pyrone (4-hydroxy-5,6-dimethyl-2-pyrone) moiety attached to a decalin core fused to a five-membered cyclic ether carrying a prenylside chain. The first step of the pathway is the synthesis of the alpha-pyrone moiety by the polyketide synthase subA via condensation of one acetyl-CoA starter unit with 3 malonyl-CoA units and 2 methylations. The alpha-pyrone is then combined with geranylgeranyl pyrophosphate (GGPP) formed by the GGPP synthase subD through the action of the prenyltransferase subC to yield a linear alpha-pyrone diterpenoid. Subsequent steps in the subglutinol biosynthetic pathway involve the decalin core formation, which is thought to be initiated by the epoxidation of the C10-C11 olefin by the FAD-dependent oxidoreductase subE. The following cyclization cascade would be catalyzed by the terpene cyclase subB. Lastly, the FAD-dependent dehydrogenase subF probably catalyzes the five-membered cyclic ether formation to complete the formation of subglutinol A. Subsequent redox reactions appear to give rise to subglutinol C and D, however, it remains unclear which enzymes are responsible for these transformations. SubD may have secondary function in the conversion of the identified subglutinols to subglutinol analog 45, which seems to be the major product of the cluster. The polypeptide is FAD-dependent monooxygenase subE (Metarhizium robertsii (strain ARSEF 23 / ATCC MYA-3075) (Metarhizium anisopliae (strain ARSEF 23))).